The chain runs to 223 residues: Pre-mRNA-splicing factor SPF27 (223 aa).

Positions 139 to 223 (NENLLHMIDC…GENKENIEDY (85 aa)) form a coiled coil.

This sequence belongs to the SPF27 family. As to quaternary structure, component of the pre-catalytic and catalytic spliceosome complexes. Component of the postcatalytic spliceosome P complex.

Its subcellular location is the nucleus. In terms of biological role, required for pre-mRNA splicing as component of the activated spliceosome. May have a scaffolding role in the spliceosome assembly as it contacts all other components of the core complex. The polypeptide is Pre-mRNA-splicing factor SPF27 (bcas2) (Xenopus tropicalis (Western clawed frog)).